The sequence spans 172 residues: Adenine phosphoribosyltransferase (172 aa).

It belongs to the purine/pyrimidine phosphoribosyltransferase family. In terms of assembly, homodimer.

The protein resides in the cytoplasm. It carries out the reaction AMP + diphosphate = 5-phospho-alpha-D-ribose 1-diphosphate + adenine. The protein operates within purine metabolism; AMP biosynthesis via salvage pathway; AMP from adenine: step 1/1. In terms of biological role, catalyzes a salvage reaction resulting in the formation of AMP, that is energically less costly than de novo synthesis. The sequence is that of Adenine phosphoribosyltransferase from Clostridium acetobutylicum (strain ATCC 824 / DSM 792 / JCM 1419 / IAM 19013 / LMG 5710 / NBRC 13948 / NRRL B-527 / VKM B-1787 / 2291 / W).